A 677-amino-acid polypeptide reads, in one-letter code: Fidgetin-like protein 1 (677 aa).

Residues 203 to 216 are compositionally biased toward polar residues; the sequence is TSSAPSGESTTATF. Disordered stretches follow at residues 203-232, 249-324, and 337-378; these read TSSAPSGESTTATFHRTPLFGNTKKEPQSF, VPSG…SFNG, and GIFG…TDDR. A Glycyl lysine isopeptide (Lys-Gly) (interchain with G-Cter in SUMO2) cross-link involves residue Lys226. The span at 264–280 shows a compositional bias: polar residues; that stretch reads DSDTINMLSNPTLNKAP. A compositionally biased stretch (basic and acidic residues) spans 281–292; sequence SKTEDSGQREDN. Lys341 bears the N6-acetyllysine mark. A compositionally biased stretch (polar residues) spans 347–358; it reads SNKQDGSEQNGN. ATP contacts are provided by residues Ala407 and 447-452; that span reads GTGKTL.

It belongs to the AAA ATPase family. In terms of assembly, hexamer. Interacts (via N-terminal one-half region) with RAD51; the interaction is direct. Interacts (via N-terminal one-half region) with SPIDR (via the C-terminal region); the interaction is direct. Interacts with FIRRM; may regulate homologous recombination. Mg(2+) is required as a cofactor.

It is found in the nucleus. The protein localises to the cytoplasm. Its subcellular location is the perinuclear region. It catalyses the reaction ATP + H2O = ADP + phosphate + H(+). Functionally, involved in DNA double-strand break (DBS) repair via homologous recombination (HR). Recruited at DSB sites independently of BRCA2, RAD51 and RAD51 paralogs in a H2AX-dependent manner. May regulate osteoblast proliferation and differentiation. May play a role in the control of male meiosis dynamic. In Rattus norvegicus (Rat), this protein is Fidgetin-like protein 1 (Fignl1).